The chain runs to 380 residues: Protein phosphatase methylesterase 1 (380 aa).

Residues 1–38 (MSALEKSMHLGRLPSRPPLPGSGGSQSGAKMRMGPGRK) are disordered. Position 15 is a phosphoserine (serine 15). Arginine 16 bears the Asymmetric dimethylarginine; alternate mark. Arginine 16 is subject to Omega-N-methylarginine; alternate. A Phosphoserine modification is found at serine 42. Catalysis depends on residues serine 156 and aspartate 181. A compositionally biased stretch (acidic residues) spans 255 to 265 (IEEEEEDEEGS). Residues 255–280 (IEEEEEDEEGSESVNKRKKEDDMETK) are disordered. The span at 268–280 (VNKRKKEDDMETK) shows a compositional bias: basic and acidic residues. Histidine 349 is an active-site residue.

The protein belongs to the AB hydrolase superfamily. In terms of assembly, binds PPP2CA and PPP2CB. In terms of processing, phosphorylated by SIK1 following increases in intracellular sodium, leading to dissociation from the protein phosphatase 2A (PP2A) complex and subsequent dephosphorylation of sodium/potassium-transporting ATPase ATP1A1.

The catalysed reaction is [phosphatase 2A protein]-C-terminal L-leucine methyl ester + H2O = [phosphatase 2A protein]-C-terminal L-leucine + methanol + H(+). Its function is as follows. Demethylates proteins that have been reversibly carboxymethylated. Demethylates PPP2CB (in vitro) and PPP2CA. Binding to PPP2CA displaces the manganese ion and inactivates the enzyme. The polypeptide is Protein phosphatase methylesterase 1 (PPME1) (Bos taurus (Bovine)).